The chain runs to 1203 residues: DNA-directed RNA polymerase subunit beta (1203 aa).

Positions 1167–1203 (LSKYAQQQEEQRKAAAQTDESKTAPATKNESQPNTQD) are disordered. The segment covering 1190-1203 (APATKNESQPNTQD) has biased composition (polar residues).

Belongs to the RNA polymerase beta chain family. As to quaternary structure, the RNAP catalytic core consists of 2 alpha, 1 beta, 1 beta' and 1 omega subunit. When a sigma factor is associated with the core the holoenzyme is formed, which can initiate transcription.

It catalyses the reaction RNA(n) + a ribonucleoside 5'-triphosphate = RNA(n+1) + diphosphate. Functionally, DNA-dependent RNA polymerase catalyzes the transcription of DNA into RNA using the four ribonucleoside triphosphates as substrates. This is DNA-directed RNA polymerase subunit beta from Levilactobacillus brevis (strain ATCC 367 / BCRC 12310 / CIP 105137 / JCM 1170 / LMG 11437 / NCIMB 947 / NCTC 947) (Lactobacillus brevis).